A 63-amino-acid chain; its full sequence is Cytochrome c oxidase subunit 7C, mitochondrial (63 aa).

The transit peptide at 1–16 (MWGQGVRRFTTSVVRR) directs the protein to the mitochondrion. Residues 17 to 33 (SHYEEGPGKNLPFSVEN) lie on the Mitochondrial matrix side of the membrane. Lys-25 bears the N6-acetyllysine; alternate mark. N6-succinyllysine; alternate is present on Lys-25. The chain crosses the membrane as a helical span at residues 34-60 (KWRLLAMMTLYLGSGFAAPFFIVRHQL). Residues 61-63 (LKK) are Mitochondrial intermembrane-facing.

This sequence belongs to the cytochrome c oxidase VIIc family. Component of the cytochrome c oxidase (complex IV, CIV), a multisubunit enzyme composed of 14 subunits. The complex is composed of a catalytic core of 3 subunits MT-CO1, MT-CO2 and MT-CO3, encoded in the mitochondrial DNA, and 11 supernumerary subunits COX4I, COX5A, COX5B, COX6A, COX6B, COX6C, COX7A, COX7B, COX7C, COX8 and NDUFA4, which are encoded in the nuclear genome. The complex exists as a monomer or a dimer and forms supercomplexes (SCs) in the inner mitochondrial membrane with NADH-ubiquinone oxidoreductase (complex I, CI) and ubiquinol-cytochrome c oxidoreductase (cytochrome b-c1 complex, complex III, CIII), resulting in different assemblies (supercomplex SCI(1)III(2)IV(1) and megacomplex MCI(2)III(2)IV(2)). Interacts with RAB5IF.

Its subcellular location is the mitochondrion inner membrane. The protein operates within energy metabolism; oxidative phosphorylation. Functionally, component of the cytochrome c oxidase, the last enzyme in the mitochondrial electron transport chain which drives oxidative phosphorylation. The respiratory chain contains 3 multisubunit complexes succinate dehydrogenase (complex II, CII), ubiquinol-cytochrome c oxidoreductase (cytochrome b-c1 complex, complex III, CIII) and cytochrome c oxidase (complex IV, CIV), that cooperate to transfer electrons derived from NADH and succinate to molecular oxygen, creating an electrochemical gradient over the inner membrane that drives transmembrane transport and the ATP synthase. Cytochrome c oxidase is the component of the respiratory chain that catalyzes the reduction of oxygen to water. Electrons originating from reduced cytochrome c in the intermembrane space (IMS) are transferred via the dinuclear copper A center (CU(A)) of subunit 2 and heme A of subunit 1 to the active site in subunit 1, a binuclear center (BNC) formed by heme A3 and copper B (CU(B)). The BNC reduces molecular oxygen to 2 water molecules using 4 electrons from cytochrome c in the IMS and 4 protons from the mitochondrial matrix. This Carlito syrichta (Philippine tarsier) protein is Cytochrome c oxidase subunit 7C, mitochondrial (COX7C).